The primary structure comprises 396 residues: Small ribosomal subunit protein mS27 (396 aa).

The protein belongs to the mitochondrion-specific ribosomal protein mS27 family. In terms of assembly, component of the mitochondrial small ribosomal subunit (mt-SSU). Mature N.crassa 74S mitochondrial ribosomes consist of a small (37S) and a large (54S) subunit. The 37S small subunit contains a 16S ribosomal RNA (16S mt-rRNA) and 32 different proteins. The 54S large subunit contains a 23S rRNA (23S mt-rRNA) and 42 different proteins.

Its subcellular location is the mitochondrion. In terms of biological role, component of the mitochondrial ribosome (mitoribosome), a dedicated translation machinery responsible for the synthesis of mitochondrial genome-encoded proteins, including at least some of the essential transmembrane subunits of the mitochondrial respiratory chain. The mitoribosomes are attached to the mitochondrial inner membrane and translation products are cotranslationally integrated into the membrane. The chain is Small ribosomal subunit protein mS27 (mrp13) from Neurospora crassa (strain ATCC 24698 / 74-OR23-1A / CBS 708.71 / DSM 1257 / FGSC 987).